The primary structure comprises 104 residues: Phosphoribosyl-ATP pyrophosphatase (104 aa).

Belongs to the PRA-PH family.

The protein resides in the cytoplasm. It catalyses the reaction 1-(5-phospho-beta-D-ribosyl)-ATP + H2O = 1-(5-phospho-beta-D-ribosyl)-5'-AMP + diphosphate + H(+). It participates in amino-acid biosynthesis; L-histidine biosynthesis; L-histidine from 5-phospho-alpha-D-ribose 1-diphosphate: step 2/9. The protein is Phosphoribosyl-ATP pyrophosphatase of Methanoregula boonei (strain DSM 21154 / JCM 14090 / 6A8).